A 412-amino-acid polypeptide reads, in one-letter code: Glutamate-pyruvate aminotransferase AlaC (412 aa).

Lys-244 carries the N6-(pyridoxal phosphate)lysine modification.

Belongs to the class-I pyridoxal-phosphate-dependent aminotransferase family. Homodimer. Requires pyridoxal 5'-phosphate as cofactor.

The protein resides in the cytoplasm. It catalyses the reaction L-alanine + 2-oxoglutarate = pyruvate + L-glutamate. Its pathway is amino-acid biosynthesis; L-alanine biosynthesis. Its function is as follows. Involved in the biosynthesis of alanine. Catalyzes the transamination of pyruvate by glutamate, leading to the formation of L-alanine and 2-oxoglutarate. Is also able to catalyze the reverse reaction. This chain is Glutamate-pyruvate aminotransferase AlaC, found in Escherichia coli (strain K12).